The following is a 223-amino-acid chain: Glycolipid transfer protein 2 (223 aa).

Asp-69, Asn-73, Trp-116, and His-155 together coordinate a ganglioside GM3 (d18:1(4E)).

It belongs to the GLTP family.

In terms of biological role, transfers glycolipids in vitro. This chain is Glycolipid transfer protein 2, found in Arabidopsis thaliana (Mouse-ear cress).